Here is a 346-residue protein sequence, read N- to C-terminus: Phosphoribosylformylglycinamidine cyclo-ligase (346 aa).

Belongs to the AIR synthase family.

The protein resides in the cytoplasm. It carries out the reaction 2-formamido-N(1)-(5-O-phospho-beta-D-ribosyl)acetamidine + ATP = 5-amino-1-(5-phospho-beta-D-ribosyl)imidazole + ADP + phosphate + H(+). The protein operates within purine metabolism; IMP biosynthesis via de novo pathway; 5-amino-1-(5-phospho-D-ribosyl)imidazole from N(2)-formyl-N(1)-(5-phospho-D-ribosyl)glycinamide: step 2/2. In Vibrio vulnificus (strain YJ016), this protein is Phosphoribosylformylglycinamidine cyclo-ligase.